The primary structure comprises 485 residues: Adenosylhomocysteinase (485 aa).

3 residues coordinate substrate: threonine 60, aspartate 146, and glutamate 208. Position 209 to 211 (209 to 211 (TTT)) interacts with NAD(+). Residues lysine 238 and aspartate 242 each coordinate substrate. Residues asparagine 243, 272–277 (GYGDVG), glutamate 295, asparagine 330, 351–353 (IGH), and asparagine 399 each bind NAD(+).

Belongs to the adenosylhomocysteinase family. Requires NAD(+) as cofactor.

Its subcellular location is the cytoplasm. The enzyme catalyses S-adenosyl-L-homocysteine + H2O = L-homocysteine + adenosine. It participates in amino-acid biosynthesis; L-homocysteine biosynthesis; L-homocysteine from S-adenosyl-L-homocysteine: step 1/1. Functionally, may play a key role in the regulation of the intracellular concentration of adenosylhomocysteine. This Streptomyces avermitilis (strain ATCC 31267 / DSM 46492 / JCM 5070 / NBRC 14893 / NCIMB 12804 / NRRL 8165 / MA-4680) protein is Adenosylhomocysteinase.